Consider the following 374-residue polypeptide: Transaldolase (374 aa).

The active-site Schiff-base intermediate with substrate is K140.

Belongs to the transaldolase family. Type 2 subfamily.

The protein resides in the cytoplasm. It catalyses the reaction D-sedoheptulose 7-phosphate + D-glyceraldehyde 3-phosphate = D-erythrose 4-phosphate + beta-D-fructose 6-phosphate. Its pathway is carbohydrate degradation; pentose phosphate pathway; D-glyceraldehyde 3-phosphate and beta-D-fructose 6-phosphate from D-ribose 5-phosphate and D-xylulose 5-phosphate (non-oxidative stage): step 2/3. Transaldolase is important for the balance of metabolites in the pentose-phosphate pathway. This chain is Transaldolase, found in Renibacterium salmoninarum (strain ATCC 33209 / DSM 20767 / JCM 11484 / NBRC 15589 / NCIMB 2235).